The chain runs to 775 residues: Aconitate hydratase, mitochondrial (775 aa).

The N-terminal 25 residues, 1 to 25, are a transit peptide targeting the mitochondrion; it reads MLTTLARASAMLLGARGFASAADLD. Residues Q95 and 188–190 contribute to the substrate site; that span reads DSH. An N-linked (GlcNAc...) asparagine glycan is attached at N337. Position 381 (C381) interacts with [4Fe-4S] cluster. An N-linked (GlcNAc...) asparagine glycan is attached at N383. Residues C444 and C447 each coordinate [4Fe-4S] cluster. Residue R470 participates in substrate binding. A glycan (N-linked (GlcNAc...) asparagine) is linked at N471. Residues R475 and R603 each coordinate substrate. A glycan (N-linked (GlcNAc...) asparagine) is linked at N608. 666–667 is a binding site for substrate; the sequence is SR. 2 N-linked (GlcNAc...) asparagine glycosylation sites follow: N754 and N763.

The protein belongs to the aconitase/IPM isomerase family. In terms of assembly, monomer. Requires [4Fe-4S] cluster as cofactor.

It localises to the mitochondrion. It catalyses the reaction citrate = D-threo-isocitrate. It functions in the pathway carbohydrate metabolism; tricarboxylic acid cycle; isocitrate from oxaloacetate: step 2/2. Functionally, catalyzes the isomerization of citrate to isocitrate via cis-aconitate. The chain is Aconitate hydratase, mitochondrial from Arthroderma benhamiae (strain ATCC MYA-4681 / CBS 112371) (Trichophyton mentagrophytes).